Consider the following 530-residue polypeptide: Capsid protein VP1 (530 aa).

Positions 1-20 (MMMASKDATSSVDGASGAGQ) are disordered. The shell domain stretch occupies residues 1-225 (MMMASKDATS…FLFLVPPTVE (225 aa)). Positions 226-278 (QKTRPFTLPNLPLSSLSNSRAPLPISSMGISPDNVQSVQFQNGRCTLDGRLVG) are P1 sub-domain 1. The tract at residues 226–530 (QKTRPFTLPN…SARGRLGLRR (305 aa)) is protruding domain. A P2 sub-domain region spans residues 279 to 405 (TTPVSLSHVA…GSSITEATHL (127 aa)). The tract at residues 406-530 (APSVYPPGFG…SARGRLGLRR (125 aa)) is P1 sub-domain 2. Positions 523–530 (RGRLGLRR) are plays a role in binding to host histo-blood group structures antigens and in the formation of P-particles.

The protein belongs to the caliciviridae capsid protein family. Homodimer. Homomultimer. Interacts with the minor capsid protein VP2. Interacts (via C-terminus) with host type I histo-blood group structures antigens at the surface of target cells. In terms of processing, may be cleaved by host protease to generate soluble capsid protein. Assembled capsid cannot be cleaved.

The protein localises to the virion. It localises to the host cytoplasm. In terms of biological role, capsid protein self assembles to form an icosahedral capsid with a T=3 symmetry, about 38 nm in diameter, and consisting of 180 capsid proteins. A smaller form of capsid with a diameter of 23 nm might be capsid proteins assembled as icosahedron with T=1 symmetry. The capsid encapsulates the genomic RNA and is decorated with VP2 proteins. Attaches virion to target cells by binding histo-blood group antigens (HBGAs) present on gastroduodenal epithelial cells. Functionally, the soluble capsid protein may play a role in viral immunoevasion. The polypeptide is Capsid protein VP1 (Norovirus (strain Human/NoV/United States/Norwalk/1968/GI) (Hu/NV/NV/1968/US)).